A 558-amino-acid polypeptide reads, in one-letter code: Inositol-3-phosphate synthase 1 (558 aa).

Residues glycine 67, glycine 68, asparagine 69, asparagine 70, aspartate 141, serine 177, valine 178, glutamine 188, arginine 191, threonine 228, alanine 229, asparagine 230, threonine 231, glycine 278, serine 279, aspartate 303, serine 306, asparagine 337, asparagine 338, aspartate 339, and lysine 352 each contribute to the NAD(+) site. Phosphoserine is present on serine 279. Phosphoserine is present on serine 357. NAD(+) is bound by residues glycine 390, aspartate 391, aspartate 419, and serine 420. Positions 537-558 are disordered; sequence ATNGCTGDANGHLQEEPPMPTT.

This sequence belongs to the myo-inositol 1-phosphate synthase family. NAD(+) serves as cofactor. Phosphorylation at Ser-279 and Ser-357 may be associated with a decrease in activity. As to expression, highly expressed in testis, ovary, heart, placenta and pancreas. Weakly expressed in blood leukocyte, thymus, skeletal muscle and colon.

Its subcellular location is the cytoplasm. The catalysed reaction is D-glucose 6-phosphate = 1D-myo-inositol 3-phosphate. The protein operates within polyol metabolism; myo-inositol biosynthesis; myo-inositol from D-glucose 6-phosphate: step 1/2. Inhibited by mood-stabilizing drugs such as valproate (VPA) and lithium. Functionally, key enzyme in myo-inositol biosynthesis pathway that catalyzes the conversion of glucose 6-phosphate to 1-myo-inositol 1-phosphate in a NAD-dependent manner. Rate-limiting enzyme in the synthesis of all inositol-containing compounds. This Homo sapiens (Human) protein is Inositol-3-phosphate synthase 1 (ISYNA1).